A 217-amino-acid chain; its full sequence is Large ribosomal subunit protein bL25 (217 aa).

The tract at residues Val-178–Glu-217 is disordered. The segment covering Glu-184–Val-205 has biased composition (acidic residues). The span at Gly-206–Glu-217 shows a compositional bias: basic and acidic residues.

It belongs to the bacterial ribosomal protein bL25 family. CTC subfamily. Part of the 50S ribosomal subunit; part of the 5S rRNA/L5/L18/L25 subcomplex. Contacts the 5S rRNA. Binds to the 5S rRNA independently of L5 and L18.

Functionally, this is one of the proteins that binds to the 5S RNA in the ribosome where it forms part of the central protuberance. The protein is Large ribosomal subunit protein bL25 of Staphylococcus aureus (strain USA300).